Reading from the N-terminus, the 113-residue chain is uncharacterized protein (113 aa).

An N-terminal signal peptide occupies residues 1-16; it reads MKCLVVLTALFGISTA. Residues 81-101 are compositionally biased toward gly residues; the sequence is GGNGGNGGGGNGGNNGNGNGN. The segment at 81 to 103 is disordered; sequence GGNGGNGGGGNGGNNGNGNGNNG.

In terms of tissue distribution, nacreous layer of shell (at protein level).

It localises to the secreted. This is an uncharacterized protein from Margaritifera margaritifera (Freshwater pearl mussel).